Consider the following 392-residue polypeptide: Tryptophan synthase beta chain (392 aa).

N6-(pyridoxal phosphate)lysine is present on Lys-86.

It belongs to the TrpB family. As to quaternary structure, tetramer of two alpha and two beta chains. Pyridoxal 5'-phosphate is required as a cofactor.

The catalysed reaction is (1S,2R)-1-C-(indol-3-yl)glycerol 3-phosphate + L-serine = D-glyceraldehyde 3-phosphate + L-tryptophan + H2O. Its pathway is amino-acid biosynthesis; L-tryptophan biosynthesis; L-tryptophan from chorismate: step 5/5. The beta subunit is responsible for the synthesis of L-tryptophan from indole and L-serine. The sequence is that of Tryptophan synthase beta chain (trpB) from Buchnera aphidicola subsp. Melaphis rhois.